Reading from the N-terminus, the 96-residue chain is Large ribosomal subunit protein eL43 (96 aa).

The C4-type zinc-finger motif lies at 41-62 (CPVCGFMKLKRISTSIWECKKC).

It belongs to the eukaryotic ribosomal protein eL43 family. Requires Zn(2+) as cofactor.

In Methanococcus aeolicus (strain ATCC BAA-1280 / DSM 17508 / OCM 812 / Nankai-3), this protein is Large ribosomal subunit protein eL43.